A 516-amino-acid chain; its full sequence is L-amino-acid oxidase (516 aa).

Residues 1–18 (MNVFFMFSLLFLAALGSC) form the signal peptide. Cys-28 and Cys-189 are oxidised to a cystine. FAD-binding positions include 61-62 (MA), 81-82 (EA), Arg-89, and 103-106 (GPMR). The substrate site is built by Arg-106 and His-239. Position 279 (Val-279) interacts with FAD. The cysteines at positions 349 and 430 are disulfide-linked. N-linked (GlcNAc...) asparagine glycosylation occurs at Asn-379. Residue Tyr-390 coordinates substrate. Residues Glu-475 and 482-487 (GWIDST) each bind FAD. Position 482–483 (482–483 (GW)) interacts with substrate.

This sequence belongs to the flavin monoamine oxidase family. FIG1 subfamily. As to quaternary structure, homodimer; non-covalently linked. FAD is required as a cofactor. In terms of processing, N-glycosylated. In terms of tissue distribution, expressed by the venom gland.

The protein localises to the secreted. The enzyme catalyses an L-alpha-amino acid + O2 + H2O = a 2-oxocarboxylate + H2O2 + NH4(+). The catalysed reaction is L-leucine + O2 + H2O = 4-methyl-2-oxopentanoate + H2O2 + NH4(+). It catalyses the reaction L-phenylalanine + O2 + H2O = 3-phenylpyruvate + H2O2 + NH4(+). It carries out the reaction L-methionine + O2 + H2O = 4-methylsulfanyl-2-oxobutanoate + H2O2 + NH4(+). The enzyme catalyses L-arginine + O2 + H2O = 5-guanidino-2-oxopentanoate + H2O2 + NH4(+). Functionally, catalyzes an oxidative deamination of predominantly hydrophobic and aromatic L-amino acids, thus producing hydrogen peroxide that may contribute to the diverse toxic effects of this enzyme. Is active on L-Arg, L-Phe, L-Met, and L-Leu and is weakly active on L-Val. Exhibits diverse biological activities, such as hemorrhage, hemolysis, edema, apoptosis of vascular endothelial cells or tumor cell lines, antibacterial and antiparasitic activities, as well as regulation of platelet aggregation. Its effect on platelets is controversial, since it either induces aggregation or inhibits agonist-induced aggregation. These different effects are probably due to different experimental conditions. This chain is L-amino-acid oxidase, found in Crotalus adamanteus (Eastern diamondback rattlesnake).